Here is a 399-residue protein sequence, read N- to C-terminus: Trimethyllysine dioxygenase (399 aa).

Fe cation is bound by residues H214, D216, and H360.

This sequence belongs to the gamma-BBH/TMLD family. Fe(2+) is required as a cofactor. The cofactor is L-ascorbate.

The protein resides in the cytoplasm. It carries out the reaction N(6),N(6),N(6)-trimethyl-L-lysine + 2-oxoglutarate + O2 = (3S)-3-hydroxy-N(6),N(6),N(6)-trimethyl-L-lysine + succinate + CO2. The protein operates within amine and polyamine biosynthesis; carnitine biosynthesis. Converts trimethyllysine (TML) into hydroxytrimethyllysine (HTML). This Meyerozyma guilliermondii (strain ATCC 6260 / CBS 566 / DSM 6381 / JCM 1539 / NBRC 10279 / NRRL Y-324) (Yeast) protein is Trimethyllysine dioxygenase.